The sequence spans 263 residues: Putative methyltransferase DDB_G0268948 (263 aa).

The protein belongs to the methyltransferase superfamily.

In Dictyostelium discoideum (Social amoeba), this protein is Putative methyltransferase DDB_G0268948.